A 145-amino-acid chain; its full sequence is Large ribosomal subunit protein uL13 (145 aa).

This sequence belongs to the universal ribosomal protein uL13 family. In terms of assembly, part of the 50S ribosomal subunit.

This protein is one of the early assembly proteins of the 50S ribosomal subunit, although it is not seen to bind rRNA by itself. It is important during the early stages of 50S assembly. This Geobacillus thermodenitrificans (strain NG80-2) protein is Large ribosomal subunit protein uL13.